A 638-amino-acid chain; its full sequence is MSKTPLLDTIRTPDDLRKLRIDQVQQVADELRQETIDAVSVTGGHFGAGLGVVELTTAIHYVFDTPRDRLIWDVGHQAYPHKILTGRRDRIRTLRTAGGLSGFTKRTESDYDPFGAAHSSTSISAGLGMAVARDLAGGTNNVIAVIGDGSISAGMAYEAMNNAGAMNSRLIVILNDNNMSIAPPVGAMSAYLSRLYSGKTYRSLREAGKQIGKHLPKLIADRAARAEEYSRGFMMGGGTLFEELGFYYVGPIDGHNLDHLLPILQNVRDAETGPFLIHVVTQKGKGYAPAEAASDKYHAVVKFDIATGTQAKAKSNAPSYQNVFGQSLVKEAAKDDKVVGITAAMPSGTGIDIFEKAFPDRTFDVGIAEQHAVTFAAGLATEGFKPFCAIYSTFLQRGYDQIVHDVAIQSLPVRFAIDRAGLVGADGATHAGSFDNAYLGCLPNFVIMAASDEAELVHMVATQVAINDRPSAVRYPRGEGRGVEMPDVGVPLEIGKGRVIRQGNKVALLSFGTRLAECEKAAEELATLGLSTTVADARFMKPLDVDLVIKLANEHEILITIEEGSIGGFGSHVMQTLSDHGKLDGEVKMRAMVLPDVFLDHDTPAAMYAAAGLDAKAIVKKVFEALGKEHAAETVKLA.

Thiamine diphosphate is bound by residues His76 and 117–119; that span reads AHS. A Mg(2+)-binding site is contributed by Asp148. Thiamine diphosphate-binding positions include 149-150, Asn177, Tyr287, and Glu369; that span reads GS. Asn177 serves as a coordination point for Mg(2+).

This sequence belongs to the transketolase family. DXPS subfamily. Homodimer. Mg(2+) is required as a cofactor. It depends on thiamine diphosphate as a cofactor.

The enzyme catalyses D-glyceraldehyde 3-phosphate + pyruvate + H(+) = 1-deoxy-D-xylulose 5-phosphate + CO2. It functions in the pathway metabolic intermediate biosynthesis; 1-deoxy-D-xylulose 5-phosphate biosynthesis; 1-deoxy-D-xylulose 5-phosphate from D-glyceraldehyde 3-phosphate and pyruvate: step 1/1. Catalyzes the acyloin condensation reaction between C atoms 2 and 3 of pyruvate and glyceraldehyde 3-phosphate to yield 1-deoxy-D-xylulose-5-phosphate (DXP). This Rhodopseudomonas palustris (strain HaA2) protein is 1-deoxy-D-xylulose-5-phosphate synthase.